A 498-amino-acid chain; its full sequence is Lysine--tRNA ligase (498 aa).

The Mg(2+) site is built by glutamate 408 and glutamate 415.

This sequence belongs to the class-II aminoacyl-tRNA synthetase family. In terms of assembly, homodimer. The cofactor is Mg(2+).

The protein localises to the cytoplasm. It catalyses the reaction tRNA(Lys) + L-lysine + ATP = L-lysyl-tRNA(Lys) + AMP + diphosphate. The polypeptide is Lysine--tRNA ligase (Listeria innocua serovar 6a (strain ATCC BAA-680 / CLIP 11262)).